The following is a 659-amino-acid chain: Beta-galactosidase BgaA (659 aa).

Arg103 serves as a coordination point for substrate. A Zn(2+)-binding site is contributed by Cys107. Asn141 contacts substrate. Glu142 functions as the Proton donor in the catalytic mechanism. 3 residues coordinate Zn(2+): Cys148, Cys150, and Cys153. The active-site Nucleophile is Glu298. Position 307 (Trp307) interacts with substrate.

This sequence belongs to the glycosyl hydrolase 42 family. In terms of assembly, dimer.

It carries out the reaction Hydrolysis of terminal non-reducing beta-D-galactose residues in beta-D-galactosides.. Inhibited by Cu(2+), Hg(2+) and Zn(2+). No effect with Ca(2+), Mg(2+), Mn(2+) or excess EDTA (10 mM). Functionally, involved in plant cell wall degradation in cooperation with cellulosome. Hydrolyzes both p-nitrophenyl-alpha-L-arabinopyranoside (pNPAp) and p-nitrophenyl-beta-D-galactopyranoside (pNPGp), with higher activity for pNPAp. Shows hydrolysis activity against p-nitrophenyl-beta-D-fucopyranoside (pNPFp), but not against p-nitrophenyl-alpha-L-arabinofuranoside (pNPAf), o-nitrophenyl-beta-D-galactopyranoside (oNPGp), p-nitrophenyl-beta-D-xylopyranoside (pNPXp), p-nitrophenyl-beta-D-glucopyranoside (pNPGLp), p-nitrophenyl-beta-D-cellobiopyranoside (pNPCp), p-nitrophenyl-beta-lactopyranoside (pNPLp) or p-nitrophenyl-alpha-galactopyranoside (pNPalphaGp). No detectable activity against arabinan or arabinoxylan, but activity against arabinogalactan can be detected. Increases degradation activity of alpha-L-arabinofuranosidase (ArfA) and endo-1,4-beta-xylanase (XynA) when corn fiber gum and corn stem powder are used as substrates. The chain is Beta-galactosidase BgaA (bgaA) from Clostridium cellulovorans (strain ATCC 35296 / DSM 3052 / OCM 3 / 743B).